Here is a 449-residue protein sequence, read N- to C-terminus: UDP-N-acetylmuramoylalanine--D-glutamate ligase (449 aa).

119–125 (GTNGKTT) is an ATP binding site.

The protein belongs to the MurCDEF family.

The protein resides in the cytoplasm. The catalysed reaction is UDP-N-acetyl-alpha-D-muramoyl-L-alanine + D-glutamate + ATP = UDP-N-acetyl-alpha-D-muramoyl-L-alanyl-D-glutamate + ADP + phosphate + H(+). The protein operates within cell wall biogenesis; peptidoglycan biosynthesis. Cell wall formation. Catalyzes the addition of glutamate to the nucleotide precursor UDP-N-acetylmuramoyl-L-alanine (UMA). The protein is UDP-N-acetylmuramoylalanine--D-glutamate ligase of Lactococcus lactis subsp. cremoris (strain MG1363).